The following is an 897-amino-acid chain: Alanine--tRNA ligase (897 aa).

Residues His-581, His-585, Cys-684, and His-688 each contribute to the Zn(2+) site.

This sequence belongs to the class-II aminoacyl-tRNA synthetase family. Requires Zn(2+) as cofactor.

It is found in the cytoplasm. It catalyses the reaction tRNA(Ala) + L-alanine + ATP = L-alanyl-tRNA(Ala) + AMP + diphosphate. Functionally, catalyzes the attachment of alanine to tRNA(Ala) in a two-step reaction: alanine is first activated by ATP to form Ala-AMP and then transferred to the acceptor end of tRNA(Ala). Also edits incorrectly charged Ser-tRNA(Ala) and Gly-tRNA(Ala) via its editing domain. The chain is Alanine--tRNA ligase from Mycobacterium sp. (strain JLS).